The chain runs to 494 residues: Leucine-rich repeat extensin-like protein 4 (494 aa).

Positions M1 to S25 are cleaved as a signal peptide. 3 N-linked (GlcNAc...) asparagine glycosylation sites follow: N60, N94, and N106. 9 LRR repeats span residues I121–L145, T146–Q168, L169–L193, P194–K217, L219–S240, V242–M263, K264–L287, N289–M311, and V312–L335. N289 is a glycosylation site (N-linked (GlcNAc...) asparagine). Residue N340 is glycosylated (N-linked (GlcNAc...) asparagine). Residues S404–Y494 are contains the Ser-Pro(4) repeats. Over residues P422–P479 the composition is skewed to pro residues. Positions P422 to G482 are disordered.

Post-translationally, hydroxylated on proline residues in the S-P-P-P-P repeat. O-glycosylated on hydroxyprolines. Expressed in roots, stems, leaves and flowers, mostly in vascular tissues.

The protein localises to the secreted. It localises to the cell wall. Functionally, modulates cell morphogenesis by regulating cell wall formation and assembly, and/or growth polarization. The protein is Leucine-rich repeat extensin-like protein 4 (LRX4) of Arabidopsis thaliana (Mouse-ear cress).